The following is a 292-amino-acid chain: Calponin-1 (292 aa).

The Calponin-homology (CH) domain occupies 28–131 (PQTERQLRVW…STLIALASQA (104 aa)). Calponin-like repeat units lie at residues 164 to 189 (IGLQMGTNKFASQQGMTAYGTRRHLY), 204 to 229 (ISLQMGTNKGASQAGMTAPGTKRQIF), and 243 to 268 (IGLQMGSNKGASQQGMTVYGLPRQVY). Thr-170 is subject to Phosphothreonine; by ROCK2. Ser-175 is subject to Phosphoserine; by PKC, CaMK2 and ROCK2. 2 positions are modified to phosphothreonine; by ROCK2: Thr-180 and Thr-184. At Thr-184 the chain carries Phosphothreonine; by PKC and CaMK2. The interval 185–193 (RRHLYDPKL) is calmodulin-binding. The residue at position 259 (Thr-259) is a Phosphothreonine; by ROCK2.

It belongs to the calponin family. Post-translationally, phosphorylation by PKC or CaM kinase II reduces the binding of calponin to F-actin and tropomyosin. Smooth muscle, and tissues containing significant amounts of smooth muscle.

In terms of biological role, thin filament-associated protein that is implicated in the regulation and modulation of smooth muscle contraction. It is capable of binding to actin, calmodulin and tropomyosin. The interaction of calponin with actin inhibits the actomyosin Mg-ATPase activity. The protein is Calponin-1 (CNN1) of Gallus gallus (Chicken).